The sequence spans 664 residues: Bifunctional polymyxin resistance protein ArnA (664 aa).

Residues 1-308 (MSTKAVVFAY…EFGLVAGSQM (308 aa)) are formyltransferase ArnAFT. H106 functions as the Proton donor; for formyltransferase activity in the catalytic mechanism. (6R)-10-formyltetrahydrofolate-binding positions include R116 and 138–142 (VKRAD). The segment at 318-664 (RRTRVLILGV…EAMAEKADQC (347 aa)) is dehydrogenase ArnADH. NAD(+)-binding positions include D351 and 372–373 (DI). Residues A397, Y402, and 436–437 (TS) each bind UDP-alpha-D-glucuronate. The Proton acceptor; for decarboxylase activity role is filled by E438. UDP-alpha-D-glucuronate contacts are provided by residues R464, N495, 529–538 (RLVDGGAQKR), and Y616. The Proton donor; for decarboxylase activity role is filled by R622.

The protein in the N-terminal section; belongs to the Fmt family. UDP-L-Ara4N formyltransferase subfamily. In the C-terminal section; belongs to the NAD(P)-dependent epimerase/dehydratase family. UDP-glucuronic acid decarboxylase subfamily. As to quaternary structure, homohexamer, formed by a dimer of trimers.

It carries out the reaction UDP-alpha-D-glucuronate + NAD(+) = UDP-beta-L-threo-pentopyranos-4-ulose + CO2 + NADH. It catalyses the reaction UDP-4-amino-4-deoxy-beta-L-arabinose + (6R)-10-formyltetrahydrofolate = UDP-4-deoxy-4-formamido-beta-L-arabinose + (6S)-5,6,7,8-tetrahydrofolate + H(+). The protein operates within nucleotide-sugar biosynthesis; UDP-4-deoxy-4-formamido-beta-L-arabinose biosynthesis; UDP-4-deoxy-4-formamido-beta-L-arabinose from UDP-alpha-D-glucuronate: step 1/3. It participates in nucleotide-sugar biosynthesis; UDP-4-deoxy-4-formamido-beta-L-arabinose biosynthesis; UDP-4-deoxy-4-formamido-beta-L-arabinose from UDP-alpha-D-glucuronate: step 3/3. Its pathway is bacterial outer membrane biogenesis; lipopolysaccharide biosynthesis. Its function is as follows. Bifunctional enzyme that catalyzes the oxidative decarboxylation of UDP-glucuronic acid (UDP-GlcUA) to UDP-4-keto-arabinose (UDP-Ara4O) and the addition of a formyl group to UDP-4-amino-4-deoxy-L-arabinose (UDP-L-Ara4N) to form UDP-L-4-formamido-arabinose (UDP-L-Ara4FN). The modified arabinose is attached to lipid A and is required for resistance to polymyxin and cationic antimicrobial peptides. This is Bifunctional polymyxin resistance protein ArnA from Pseudomonas syringae pv. syringae (strain B728a).